Here is a 229-residue protein sequence, read N- to C-terminus: Large ribosomal subunit protein uL1 (229 aa).

Belongs to the universal ribosomal protein uL1 family. As to quaternary structure, part of the 50S ribosomal subunit.

Its function is as follows. Binds directly to 23S rRNA. The L1 stalk is quite mobile in the ribosome, and is involved in E site tRNA release. In terms of biological role, protein L1 is also a translational repressor protein, it controls the translation of the L11 operon by binding to its mRNA. The chain is Large ribosomal subunit protein uL1 from Streptococcus pneumoniae (strain JJA).